The following is an 83-amino-acid chain: Apolipoprotein C-I, acidic form (83 aa).

The N-terminal stretch at 1-26 (MRLFLSLPVLVVVLSMVLEGPAPAQG) is a signal peptide.

It belongs to the apolipoprotein C1 family.

It is found in the secreted. This Gorilla gorilla gorilla (Western lowland gorilla) protein is Apolipoprotein C-I, acidic form (APOC1A).